A 543-amino-acid chain; its full sequence is CTP synthase (543 aa).

The amidoligase domain stretch occupies residues 1–265; sequence MARYIFITGG…DDEVLAAFAI (265 aa). Ser-13 serves as a coordination point for CTP. Ser-13 provides a ligand contact to UTP. Residue 14 to 19 coordinates ATP; the sequence is SLGKGL. Tyr-54 contacts L-glutamine. Asp-71 serves as a coordination point for ATP. Mg(2+) contacts are provided by Asp-71 and Glu-139. CTP is bound by residues 146 to 148, 186 to 191, and Lys-222; these read DIE and KTKPTQ. UTP is bound by residues 186 to 191 and Lys-222; that span reads KTKPTQ. 238-240 provides a ligand contact to ATP; it reads RDA. Residues 291–542 enclose the Glutamine amidotransferase type-1 domain; it reads TIAIVGKYTG…IEAALVRSRL (252 aa). Gly-353 provides a ligand contact to L-glutamine. Catalysis depends on Cys-380, which acts as the Nucleophile; for glutamine hydrolysis. L-glutamine-binding positions include 381–384, Glu-404, and Arg-470; that span reads FGMQ. Active-site residues include His-515 and Glu-517.

It belongs to the CTP synthase family. In terms of assembly, homotetramer.

The enzyme catalyses UTP + L-glutamine + ATP + H2O = CTP + L-glutamate + ADP + phosphate + 2 H(+). It catalyses the reaction L-glutamine + H2O = L-glutamate + NH4(+). It carries out the reaction UTP + NH4(+) + ATP = CTP + ADP + phosphate + 2 H(+). It participates in pyrimidine metabolism; CTP biosynthesis via de novo pathway; CTP from UDP: step 2/2. Its activity is regulated as follows. Allosterically activated by GTP, when glutamine is the substrate; GTP has no effect on the reaction when ammonia is the substrate. The allosteric effector GTP functions by stabilizing the protein conformation that binds the tetrahedral intermediate(s) formed during glutamine hydrolysis. Inhibited by the product CTP, via allosteric rather than competitive inhibition. Functionally, catalyzes the ATP-dependent amination of UTP to CTP with either L-glutamine or ammonia as the source of nitrogen. Regulates intracellular CTP levels through interactions with the four ribonucleotide triphosphates. This chain is CTP synthase, found in Rhodopseudomonas palustris (strain HaA2).